The chain runs to 447 residues: MIKIKKGLDLPIAGAPAQVIEDGPTIRHVALLGEEYVGMRPSMLVKEGEHVKKGQILFEDKKNPGVVFTSPACGQVVAINRGEQRILQSIVIEITGDEQVNFDRYDRAQFTQLSREQVEKNLIDSGLWTALRTRPYSRSPAPGSSPKAIFVTAMDTQPLAANSQVIIATDKEAFVDGLNVLTKLTEGKVHVCHSAGSLPNVGNNAQITYNQFSGPHPAGLAGTHIHFIEPVSATKTVWHLGYQDVIAIGKLFTTGTLYTDRVIALAGPQVEKPRLIRTCLGADLLELTQGQLKQGENRIISGSVLCGTQSDEVHHYLGRFHTLVSVLREGREKELFGWIMPGIDKFSITRTTIGHFLKNKRFAFSTTMNGGERSMVPIGNYERVMPLDIMATHLLRDLLAGDTDSAQALGCLELDEEDLALCTYVCPGKYEYGPVLREVLTKIEQEG.

The protein belongs to the NqrA family. Composed of six subunits; NqrA, NqrB, NqrC, NqrD, NqrE and NqrF.

It catalyses the reaction a ubiquinone + n Na(+)(in) + NADH + H(+) = a ubiquinol + n Na(+)(out) + NAD(+). NQR complex catalyzes the reduction of ubiquinone-1 to ubiquinol by two successive reactions, coupled with the transport of Na(+) ions from the cytoplasm to the periplasm. NqrA to NqrE are probably involved in the second step, the conversion of ubisemiquinone to ubiquinol. The polypeptide is Na(+)-translocating NADH-quinone reductase subunit A (Photorhabdus laumondii subsp. laumondii (strain DSM 15139 / CIP 105565 / TT01) (Photorhabdus luminescens subsp. laumondii)).